A 446-amino-acid polypeptide reads, in one-letter code: T-box transcription factor TBX20 (446 aa).

The tract at residues 50-80 (SCHPNLGDLPPLETHSDFSSGGGTGSGAPLC) is disordered. Residues 108–287 (LWDKFHELGT…SNPFAKGFRD (180 aa)) constitute a DNA-binding region (T-box).

The protein resides in the nucleus. In terms of biological role, transcriptional regulator that may play a very early role in the differentiation of the cardiac precursors. The chain is T-box transcription factor TBX20 (tbx20) from Danio rerio (Zebrafish).